The sequence spans 303 residues: Porphobilinogen deaminase (303 aa).

At C235 the chain carries S-(dipyrrolylmethanemethyl)cysteine.

Belongs to the HMBS family. In terms of assembly, monomer. Requires dipyrromethane as cofactor.

It catalyses the reaction 4 porphobilinogen + H2O = hydroxymethylbilane + 4 NH4(+). Its pathway is porphyrin-containing compound metabolism; protoporphyrin-IX biosynthesis; coproporphyrinogen-III from 5-aminolevulinate: step 2/4. Tetrapolymerization of the monopyrrole PBG into the hydroxymethylbilane pre-uroporphyrinogen in several discrete steps. The sequence is that of Porphobilinogen deaminase from Campylobacter fetus subsp. fetus (strain 82-40).